The sequence spans 168 residues: Ribosome maturation factor RimM (168 aa).

The region spanning 92-166 (EDTFYKADLI…RITVDPIEGM (75 aa)) is the PRC barrel domain.

Belongs to the RimM family. Binds ribosomal protein uS19.

Its subcellular location is the cytoplasm. Its function is as follows. An accessory protein needed during the final step in the assembly of 30S ribosomal subunit, possibly for assembly of the head region. Essential for efficient processing of 16S rRNA. May be needed both before and after RbfA during the maturation of 16S rRNA. It has affinity for free ribosomal 30S subunits but not for 70S ribosomes. This Alkaliphilus metalliredigens (strain QYMF) protein is Ribosome maturation factor RimM.